We begin with the raw amino-acid sequence, 237 residues long: Regulator of G-protein signaling 9-binding protein (237 aa).

The Cytoplasmic portion of the chain corresponds to 1–214; it reads MAKEECKALL…TGPCDLSKAK (214 aa). Coiled-coil stretches lie at residues 29–58 and 144–169; these read GSAD…RLRL and VEDL…MKVN. The SNARE-like stretch occupies residues 153–202; it reads EILQVGEMIQDMEMKVNVPRWTVQARQAAGAELLSSASAGVSSVGGVSVE. The chain crosses the membrane as a helical; Anchor for type IV membrane protein span at residues 215 to 234; sequence AATIFSAVLLAAVALAVCVA. Over 235–237 the chain is Extracellular; that stretch reads KLS.

This sequence belongs to the RGS7BP/RGS9BP family. In terms of assembly, specifically interacts with isoform RGS9-1 of RGS9. Component of the RGS9-1-Gbeta5 complex composed of RGS9-1, Gbeta5 (GNB5) and RGS9BP. In terms of tissue distribution, specifically expressed in the retina. Only present in photoreceptors (at protein level).

It is found in the membrane. In terms of biological role, regulator of G protein-coupled receptor (GPCR) signaling in phototransduction. Participates in the recovery phase of visual transduction via its interaction with RGS9-1 isoform. Acts as a membrane-anchor that mediates the targeting of RGS9-1 to the photoreceptor outer segment, where phototransduction takes place. Enhances the ability of RGS9-1 to stimulate G protein GTPase activity, allowing the visual signal to be terminated on the physiologically time scale. It also controls the proteolytic stability of RGS9-1, probably by protecting it from degradation. This Bos taurus (Bovine) protein is Regulator of G-protein signaling 9-binding protein (RGS9BP).